Here is a 1020-residue protein sequence, read N- to C-terminus: Probable leucine-rich repeat receptor-like serine/threonine-protein kinase At3g14840 (1020 aa).

The signal sequence occupies residues 1 to 26; it reads MSLNRQLLFTYYFIVSLILFSDFVSS. The Extracellular portion of the chain corresponds to 27–614; that stretch reads ATLPKEEVDA…GTGGGSSVGT (588 aa). N-linked (GlcNAc...) asparagine glycosylation is found at N50 and N81. LRR repeat units lie at residues 86 to 110, 111 to 134, 136 to 157, 158 to 181, 182 to 204, 206 to 231, 253 to 276, 277 to 301, 302 to 324, and 326 to 349; these read ICHVTNIVLKAQDLQGSLPTDLSGL, PFLQELDLTRNYLNGSIPPEWGAS, LLNISLLGNRISGSIPKELGNL, TTLSGLVLEYNQLSGKIPPELGNL, PNLKRLLLSSNNLSGEIPSTFAK, TTLTDLRISDNQFTGAIPDFIQNWKG, LGTLTDLRITDLSGPESPFPPLRN, MTSMKYLILRNCNLTGDLPAYLGQN, RKLKNLDLSFNKLSGPIPATYSG, and SDVDFIYFTSNMLNGQVPSWMVDQ. Residues N124, N138, and N156 are each glycosylated (N-linked (GlcNAc...) asparagine). An N-linked (GlcNAc...) asparagine glycan is attached at N193. N276 and N289 each carry an N-linked (GlcNAc...) asparagine glycan. Residues N359, N386, N389, N417, N461, N469, and N498 are each glycosylated (N-linked (GlcNAc...) asparagine). An LRR 11 repeat occupies 479–501; the sequence is QARLSAISLTYQALCLGKGNYTV. Residues 615 to 635 form a helical membrane-spanning segment; it reads VVGSVIASTVFLVLLIGGILW. Residues 636–1020 lie on the Cytoplasmic side of the membrane; sequence WRGCLRPKSQ…LDSAYWNTRT (385 aa). The region spanning 672–949 is the Protein kinase domain; that stretch reads FDPANKIGEG…VSMLEGHSTV (278 aa). ATP is bound by residues 678 to 686 and K700; that span reads IGEGGFGPV. Y745 bears the Phosphotyrosine mark. D798 functions as the Proton acceptor in the catalytic mechanism. The residue at position 831 (S831) is a Phosphoserine. A phosphothreonine mark is found at T832 and T837. The residue at position 845 (Y845) is a Phosphotyrosine.

It belongs to the protein kinase superfamily. Ser/Thr protein kinase family.

It is found in the cell membrane. The catalysed reaction is L-seryl-[protein] + ATP = O-phospho-L-seryl-[protein] + ADP + H(+). The enzyme catalyses L-threonyl-[protein] + ATP = O-phospho-L-threonyl-[protein] + ADP + H(+). The sequence is that of Probable leucine-rich repeat receptor-like serine/threonine-protein kinase At3g14840 (LRR-RLK) from Arabidopsis thaliana (Mouse-ear cress).